We begin with the raw amino-acid sequence, 984 residues long: Ubiquitin conjugation factor E4 ufd-2 (984 aa).

The region spanning 909–982 (DVPEEFKDPI…QEWICQKRNS (74 aa)) is the U-box domain.

The protein belongs to the ubiquitin conjugation factor E4 family. In terms of assembly, forms a complex composed of deubiquitinating enzyme atx-3, E4 ubiquitin-protein ligase ufd-2 and cdc-48.1; within the complex interacts with atx-3 and cdc-48.1 (via DDDLYN motif). Forms a complex composed of cdc-48.1, myosin chaperone unc-45, ubiquitin-protein ligases ufd-2 and chn-1; the complex targets myosin chaperone unc-45 for proteasomal degradation; within the complex interacts with cdc-48.1 (via DDDLYN motif), chn-1 and unc-45. Forms a complex composed of unc-45 and myosin heavy chain B unc-54; the complex targets unfolded unc-54 for proteasomal degradation; within the complex interacts with unc-45 (via TPR domain) and unc-54. Interacts with cdc-48.2 (via DDDLYN motif). Expressed in the germline (at protein level).

The protein resides in the cytoplasm. Its subcellular location is the nucleus membrane. It is found in the nucleus. The protein localises to the nucleolus. It carries out the reaction S-ubiquitinyl-[E2 ubiquitin-conjugating enzyme]-L-cysteine + [acceptor protein]-L-lysine = [E2 ubiquitin-conjugating enzyme]-L-cysteine + N(6)-ubiquitinyl-[acceptor protein]-L-lysine.. Its pathway is protein modification; protein ubiquitination. Functionally, acts as an E4 ubiquitin ligase mediating the assembly of polyubiquitin chains on substrates ubiquitinated by another E3 ubiquitin ligase. The elongation of preexisting ubiquitin chains preferentially targets ubiquitin 'Lys-29' and 'Lys-48' residues. Also functions as an E3 ligase in conjunction with specific E1 and E2 ligases. Probably by regulating protein ubiquitination at DNA damage repair sites, coordinates DNA double-strand-break repair and apoptosis in the germline. Required for germline apoptosis in response to DNA damage downstream of cep-1. Involved in the resolution of DNA-repair sites by promoting the release of rad-51 from DNA damage foci. In association with protein-ligase chn-1, acts as an E3/E4 ligase to poly-ubiquitinate lysine residues in the UCS domain of myosin chaperone unc-45. By targeting myosin chaperone unc-45 for proteasomal degradation, regulates myosin assembly in body wall muscles in association with cdc-48.1 and chn-1. However, in a contrasting study, acts as an E3 ligase, independently of chn-1, to poly-ubiquitinate unc-45 without promoting unc-45 proteasomal degradation. Instead, uses unc-45 as an adapter protein to recruit and poly-ubiquitinate unfolded myosin heavy chain B unc-54. This is Ubiquitin conjugation factor E4 ufd-2 from Caenorhabditis elegans.